Consider the following 609-residue polypeptide: Glutamine--fructose-6-phosphate aminotransferase [isomerizing] (609 aa).

The active-site Nucleophile; for GATase activity is cysteine 2. In terms of domain architecture, Glutamine amidotransferase type-2 spans 2-219; the sequence is CGIFGYIGAK…SGELAVVGLG (218 aa). SIS domains lie at 280–426 and 458–599; these read ISEK…LKQT and WAND…IDRP. Lysine 604 acts as the For Fru-6P isomerization activity in catalysis.

In terms of assembly, homodimer.

The protein localises to the cytoplasm. The catalysed reaction is D-fructose 6-phosphate + L-glutamine = D-glucosamine 6-phosphate + L-glutamate. In terms of biological role, catalyzes the first step in hexosamine metabolism, converting fructose-6P into glucosamine-6P using glutamine as a nitrogen source. The polypeptide is Glutamine--fructose-6-phosphate aminotransferase [isomerizing] (Chlamydia caviae (strain ATCC VR-813 / DSM 19441 / 03DC25 / GPIC) (Chlamydophila caviae)).